A 92-amino-acid polypeptide reads, in one-letter code: Large ribosomal subunit protein bL28 (92 aa).

Belongs to the bacterial ribosomal protein bL28 family.

This is Large ribosomal subunit protein bL28 from Borreliella afzelii (strain PKo) (Borrelia afzelii).